We begin with the raw amino-acid sequence, 290 residues long: MLGQRAGDGERPGLPGDGEGGVPARPGRRAERPPQRPAKVNKAVTCAAHLPGAAASRPLSPNKPDRVRPGQRDRIGAKRQRRRRADAGQARAASSRRVVPTAPEVLGAVASLPDRGRPTVARVATGSRLEGLFSAASLKLSALTQSLTRVRQAPTASGATIRLPASPVEMFLTSAFLTGFSFHCLYSGIGHGEDILASVEQITIVSRPLSGQRGAGPGNSAYTPRRSQGGPRAATTPGFRFPCRGLVRRAVLRLTVTVQDCILTALLAVSFHSIGVVIMTSSYLLGPVVK.

Disordered stretches follow at residues 1-98 and 209-236; these read MLGQ…SRRV and LSGQ…AATT. A compositionally biased stretch (basic and acidic residues) spans 63-76; sequence KPDRVRPGQRDRIG. Over residues 87-97 the composition is skewed to low complexity; the sequence is AGQARAASSRR. The helical transmembrane segment at 261–281 threads the bilayer; it reads CILTALLAVSFHSIGVVIMTS.

The protein resides in the membrane. This is an uncharacterized protein from Homo sapiens (Human).